The sequence spans 89 residues: Small ribosomal subunit protein bS20 (89 aa).

Residues 1–11 are compositionally biased toward basic and acidic residues; it reads MANHKSAEKRN. The disordered stretch occupies residues 1-30; the sequence is MANHKSAEKRNRQNQVARLRNKSTRTAMKN.

Belongs to the bacterial ribosomal protein bS20 family.

In terms of biological role, binds directly to 16S ribosomal RNA. The chain is Small ribosomal subunit protein bS20 from Desulfotalea psychrophila (strain LSv54 / DSM 12343).